Reading from the N-terminus, the 109-residue chain is MAPEVIRQDFQAGEVAFRRTGYLRGRSVLTQTKHSLAGNGRHPVALRTRLGSLALGAVPTWTKLWAQSTTWQTRNHTRTGHAYPRFTRPSFPSCNRNGKRRKLRLGLPY.

Residues 77 to 98 (TRTGHAYPRFTRPSFPSCNRNG) form a disordered region.

This is an uncharacterized protein from Homo sapiens (Human).